The primary structure comprises 315 residues: Ribosomal protein L11 methyltransferase (315 aa).

Residues Thr-161, Gly-182, Asp-204, and Asn-248 each contribute to the S-adenosyl-L-methionine site.

This sequence belongs to the methyltransferase superfamily. PrmA family.

It is found in the cytoplasm. It carries out the reaction L-lysyl-[protein] + 3 S-adenosyl-L-methionine = N(6),N(6),N(6)-trimethyl-L-lysyl-[protein] + 3 S-adenosyl-L-homocysteine + 3 H(+). In terms of biological role, methylates ribosomal protein L11. This Shouchella clausii (strain KSM-K16) (Alkalihalobacillus clausii) protein is Ribosomal protein L11 methyltransferase.